Consider the following 51-residue polypeptide: uncharacterized protein (51 aa).

Positions 1 to 24 (MGGRFSGRVGIEKGGHPPSAADHS) are disordered.

This is an uncharacterized protein from Escherichia coli.